We begin with the raw amino-acid sequence, 741 residues long: Zinc finger protein 425 (741 aa).

Residues 1-69 enclose the KRAB domain; sequence DDVALYFSGQ…EQGCLDKTRR (69 aa). Disordered regions lie at residues 67–86 and 128–169; these read TRRT…DTGK and RRDT…TPGR. Residues 132–151 show a composition bias toward polar residues; it reads FQSPSLQETEIPNKKVSITA. A compositionally biased stretch (basic and acidic residues) spans 153 to 168; that stretch reads DPDKKDLRHKPRETPG. 19 consecutive C2H2-type zinc fingers follow at residues 179–201, 235–257, 263–285, 291–313, 319–341, 347–369, 375–397, 403–425, 431–453, 459–481, 487–509, 515–537, 543–565, 571–593, 599–621, 627–649, 655–677, 683–705, and 711–733; these read YSCY…KRSH, FQCS…QVVH, YPCP…LCLH, FCCG…LRLH, FQCP…LSQH, FHCP…QRTH, FSCD…IRVH, FSCP…GLQH, FQCP…QRLH, FPCA…TRVH, FPCG…LKVH, FSCA…TRLH, FQCP…QRMH, FACS…LRLH, YQCP…LLQH, FSCV…IRVH, FQCP…LYTH, FQCP…LCLH, and FSCD…IAVH.

Belongs to the krueppel C2H2-type zinc-finger protein family.

It is found in the nucleus. Its subcellular location is the cytoplasm. In terms of biological role, acts as a transcriptional repressor. The protein is Zinc finger protein 425 (ZNF425) of Macaca fascicularis (Crab-eating macaque).